The following is a 76-amino-acid chain: Putative defensin-like protein 62 (76 aa).

Residues 1–26 form the signal peptide; the sequence is MDVTKTYVTIFVVAILTISVLIQIQQ. 4 disulfides stabilise this stretch: Cys30-Cys71, Cys34-Cys57, Cys43-Cys69, and Cys47-Cys70.

This sequence belongs to the DEFL family.

The protein resides in the secreted. The polypeptide is Putative defensin-like protein 62 (Arabidopsis thaliana (Mouse-ear cress)).